The following is a 314-amino-acid chain: UDP-glucose 4-epimerase (314 aa).

Residues 11–12 (FI), 31–36 (DNFATG), 56–57 (DI), and 77–81 (LAAQI) each bind NAD(+). 2 residues coordinate substrate: serine 121 and tyrosine 146. Residues tyrosine 146 and lysine 150 each coordinate NAD(+). Tyrosine 146 serves as the catalytic Proton acceptor. Substrate-binding positions include asparagine 175, 189–190 (VV), 204–206 (RVF), arginine 213, and 271–274 (RLGD).

It belongs to the NAD(P)-dependent epimerase/dehydratase family. In terms of assembly, homodimer. NAD(+) serves as cofactor.

It carries out the reaction UDP-alpha-D-glucose = UDP-alpha-D-galactose. Its pathway is carbohydrate metabolism; galactose metabolism. Its function is as follows. Involved in the metabolism of galactose. Catalyzes the conversion of UDP-galactose (UDP-Gal) to UDP-glucose (UDP-Glc) through a mechanism involving the transient reduction of NAD. This is UDP-glucose 4-epimerase (galE1) from Mycobacterium tuberculosis (strain CDC 1551 / Oshkosh).